Reading from the N-terminus, the 339-residue chain is GTPase Obg (339 aa).

One can recognise an Obg domain in the interval 1–159 (MKFLDQAKVY…RALWLRLKLI (159 aa)). Residues 160–327 (ADGGIIGLPN…VLRSVAHVIE (168 aa)) form the OBG-type G domain. Residues 166–173 (GLPNAGKS), 191–195 (FTTLY), 212–215 (DIPG), 279–282 (SQVD), and 308–310 (SAV) contribute to the GTP site. Ser173 and Thr193 together coordinate Mg(2+).

This sequence belongs to the TRAFAC class OBG-HflX-like GTPase superfamily. OBG GTPase family. In terms of assembly, monomer. The cofactor is Mg(2+).

Its subcellular location is the cytoplasm. An essential GTPase which binds GTP, GDP and possibly (p)ppGpp with moderate affinity, with high nucleotide exchange rates and a fairly low GTP hydrolysis rate. Plays a role in control of the cell cycle, stress response, ribosome biogenesis and in those bacteria that undergo differentiation, in morphogenesis control. The protein is GTPase Obg of Bartonella bacilliformis (strain ATCC 35685 / KC583 / Herrer 020/F12,63).